Reading from the N-terminus, the 340-residue chain is Glyceraldehyde-3-phosphate dehydrogenase, cytosolic (340 aa).

Residues 16 to 17 (RI), Asp-38, and Arg-85 contribute to the NAD(+) site. D-glyceraldehyde 3-phosphate is bound by residues 156–158 (SCT), Thr-187, 216–217 (TG), and Arg-239. The active-site Nucleophile is Cys-157. Residue Asn-321 participates in NAD(+) binding.

Belongs to the glyceraldehyde-3-phosphate dehydrogenase family. In terms of assembly, homotetramer.

The protein resides in the cytoplasm. It catalyses the reaction D-glyceraldehyde 3-phosphate + phosphate + NAD(+) = (2R)-3-phospho-glyceroyl phosphate + NADH + H(+). It participates in carbohydrate degradation; glycolysis; pyruvate from D-glyceraldehyde 3-phosphate: step 1/5. Its function is as follows. Key enzyme in glycolysis that catalyzes the first step of the pathway by converting D-glyceraldehyde 3-phosphate (G3P) into 3-phospho-D-glyceroyl phosphate. Essential for the maintenance of cellular ATP levels and carbohydrate metabolism. This is Glyceraldehyde-3-phosphate dehydrogenase, cytosolic from Ginkgo biloba (Ginkgo).